A 552-amino-acid chain; its full sequence is MFS-type transporter atr4 (552 aa).

The disordered stretch occupies residues 1–102; sequence MEDPKSLSAP…NIVDWDGPND (102 aa). Low complexity predominate over residues 16-27; that stretch reads ADTTTADETPAA. 2 stretches are compositionally biased toward polar residues: residues 38-47 and 71-80; these read KAGSESSENT and LRNSSVSRSN. The N-linked (GlcNAc...) asparagine glycan is linked to Asn73. 6 helical membrane-spanning segments follow: residues 118–138, 153–173, 182–202, 214–234, 244–264, and 272–292; these read IFLV…LATG, LGSL…LVIA, MPLY…CALG, LQGC…SDLI, GIYA…GGFL, and WLMW…FVVM. Asn314 is a glycosylation site (N-linked (GlcNAc...) asparagine). 6 helical membrane-spanning segments follow: residues 346–366, 385–405, 425–445, 452–472, 498–518, and 521–541; these read PIIF…YLLF, GLVY…FGVF, LLPM…YGWS, WIVP…TLVC, VVGA…GIGW, and SLLA…YVYG.

Belongs to the major facilitator superfamily.

It is found in the cell membrane. MFS-type transporter; part of the gene cluster that mediates the biosynthesis of atranorin, a depside of polyketide origin that accumulates in the cortical or medullary layers of lichen thalli. This chain is MFS-type transporter atr4, found in Stereocaulon alpinum (Alpine snow lichen).